Here is a 433-residue protein sequence, read N- to C-terminus: Pyroglutamylated RF-amide peptide receptor (433 aa).

The Extracellular portion of the chain corresponds to 1-46 (MQALNITAEQFSRLLSAHNLTREQFIHRYGLRPLVYTPELPARAKL). N5 and N19 each carry an N-linked (GlcNAc...) asparagine glycan. The helical transmembrane segment at 47-67 (AFALAGALIFALALFGNSLVI) threads the bilayer. The Cytoplasmic segment spans residues 68 to 81 (YVVTRSKAMRTVTN). The helical transmembrane segment at 82–102 (IFICSLALSDLLIAFFCIPVT) threads the bilayer. Topologically, residues 103–120 (MLQNISDKWLGGAFICKM) are extracellular. The chain crosses the membrane as a helical span at residues 121–141 (VPFVQSTAVVTEILTMTCIAV). At 142–162 (ERHQGLIHPFKMKWQYTTRRA) the chain is on the cytoplasmic side. A helical transmembrane segment spans residues 163 to 183 (FTILGVVWLAAIIVGSPMWHV). Residues 184–212 (QRLEIKYDFLYEKEHVCCLEEWASPMHQR) lie on the Extracellular side of the membrane. A helical transmembrane segment spans residues 213-233 (IYTTFILVILFLLPLVVMLVL). The Cytoplasmic portion of the chain corresponds to 234–271 (YSKIGYELWIKKRVGDSSALQTIHGKEMSKIARKKKRA). A helical transmembrane segment spans residues 272–292 (VVMMVTVVALFAACWAPFHVV). Over 293-313 (HMMVEYSNFEKEYDDVTIKMV) the chain is Extracellular. A helical transmembrane segment spans residues 314-334 (FAVAQTIGFFNSICNPFVYAF). The Cytoplasmic portion of the chain corresponds to 335–433 (MNENFKKNFL…NSTFGSGHEL (99 aa)).

This sequence belongs to the G-protein coupled receptor 1 family. As to expression, expressed widely in the brain with high levels in the cortex and hypothalamus, and moderate levels in the brain stem, caudate nucleus, midbrain hippocampus, thalamus, trigeminal ganglia and spinal cord. Particularly strong expression detected in the mitral cell layer of the olfactory bulb, accessory olfactory bulb, island of Calleja and nucleus of the solitary tract. In peripheral tissues, expressed at moderate levels in the eye, liver, kidney, pituitary gland, testis and thymus.

It localises to the cell membrane. In terms of biological role, receptor for the orexigenic neuropeptide QRFP. The activity of this receptor is mediated by G proteins that modulate adenylate cyclase activity and intracellular calcium levels. The polypeptide is Pyroglutamylated RF-amide peptide receptor (Qrfpr) (Mus musculus (Mouse)).